A 306-amino-acid chain; its full sequence is Formimidoylglutamase (306 aa).

Over residues 1–13 (MFQNATDWTPTST) the composition is skewed to polar residues. A disordered region spans residues 1–36 (MFQNATDWTPTSTDPRDEQFGGVVEPVPTPSDADDY). Mn(2+) contacts are provided by Asn-123, Asp-147, His-149, Asp-151, Asp-234, and Asp-236.

It belongs to the arginase family. It depends on Mn(2+) as a cofactor.

It carries out the reaction N-formimidoyl-L-glutamate + H2O = formamide + L-glutamate. The protein operates within amino-acid degradation; L-histidine degradation into L-glutamate; L-glutamate from N-formimidoyl-L-glutamate (hydrolase route): step 1/1. Catalyzes the conversion of N-formimidoyl-L-glutamate to L-glutamate and formamide. This chain is Formimidoylglutamase, found in Halobacterium salinarum (strain ATCC 29341 / DSM 671 / R1).